Reading from the N-terminus, the 339-residue chain is Oncoprotein MEQ (339 aa).

A disordered region spans residues 1–80 (MSQEPEPGAM…ARRRRRKQTD (80 aa)). Serine 42 carries the phosphoserine; by host CDK2 modification. The basic motif stretch occupies residues 57 to 84 (KQKLERRRKRNRDAARRRRRKQTDYVDK). The bZIP domain maps to 57 to 120 (KQKLERRRKR…TSLRVQLACH (64 aa)). The span at 60–77 (LERRRKRNRDAARRRRRK) shows a compositional bias: basic residues. The short motif at 62 to 78 (RRRKRNRDAARRRRRKQ) is the Nuclear localization signal element. The leucine-zipper stretch occupies residues 85-113 (LHEACEELQRANEHLRKEIRDLRTECTSL). The interval 120 to 339 (HEPVCPMAVP…VWWFPGDGRP (220 aa)) is transactivation domain. Residues 145–160 (PEPPICTPPPPSPDEP) are compositionally biased toward pro residues. The tract at residues 145-172 (PEPPICTPPPPSPDEPNAPHCSGSQPPI) is disordered.

Belongs to the bZIP family. Jun subfamily. Homodimer. Interacts with host JUN; this interaction allows MEQ to engage in host cell processes by disguising itself as a cellular JUN. In terms of processing, phosphorylated by host CDK2; this phosphorylation greatly reduces the DNA binding activity of MEQ.

It localises to the host nucleus. The protein resides in the host nucleolus. In terms of biological role, functions as a DNA-binding transcription factor. Promotes transformation, host cell growth, host cell-cycle progression through G1/S phase, and possesses antiapoptotic activity. Forms functional heterodimers with host JUN. These heterodimers bind with high affinity DNA sequences called MEQ-responsive elements MERE I (TGACA/GTCA), while MEQ homodimers bind a second type of sites termed MERE II (ACACA). Both homo and heterodimerization of MEQ are required for oncogenesis. This is Oncoprotein MEQ (MDV005) from Gallid herpesvirus 2 (strain Chicken/Md5/ATCC VR-987) (GaHV-2).